We begin with the raw amino-acid sequence, 81 residues long: MNVQHEVSLLVGEIQRLGSKNADGQTCVKFGVLFNDDRCANIFEALVGTLRAAKRKKIIAFEGELLLQGVHDNVDITLLQE.

Belongs to the costars family.

The chain is Costars family protein ABRACL from Salmo salar (Atlantic salmon).